Reading from the N-terminus, the 880-residue chain is Alanine--tRNA ligase (880 aa).

Residues H567, H571, C669, and H673 each coordinate Zn(2+).

It belongs to the class-II aminoacyl-tRNA synthetase family. Zn(2+) serves as cofactor.

It is found in the cytoplasm. The enzyme catalyses tRNA(Ala) + L-alanine + ATP = L-alanyl-tRNA(Ala) + AMP + diphosphate. In terms of biological role, catalyzes the attachment of alanine to tRNA(Ala) in a two-step reaction: alanine is first activated by ATP to form Ala-AMP and then transferred to the acceptor end of tRNA(Ala). Also edits incorrectly charged Ser-tRNA(Ala) and Gly-tRNA(Ala) via its editing domain. This Bacillus cytotoxicus (strain DSM 22905 / CIP 110041 / 391-98 / NVH 391-98) protein is Alanine--tRNA ligase.